The chain runs to 99 residues: Bacterial microcompartment shell vertex protein EutN (99 aa).

The BMV domain occupies 5–87; that stretch reads MKLAVVTGQI…VDLCVIGIVD (83 aa).

Belongs to the CcmL/EutN family. In terms of assembly, homopentamer with a small central pore.

It is found in the bacterial microcompartment. It functions in the pathway amine and polyamine degradation; ethanolamine degradation. Functionally, probably forms vertices in the bacterial microcompartment (BMC) shell dedicated to ethanolamine degradation. Expression of eutK, eutL, eutM, eutN, eutS (eutSMNLK) in E.coli leads to formation of a single BMC. Coexpression of eutQ with eutSMNLK permits E.coli to make cells with more than one mobile BMC, as is usual in vivo. It may be involved in transporting positively charged molecules into and out of the BMC. The ethanolamine (EA) catabolic bacterial microcompartment (BMC) probably concentrates low levels of ethanolamine catabolic enzymes, concentrates volatile reaction intermediates, keeps the level of toxic acetaldehyde low, generates enough acetyl-CoA to support cell growth, and maintains a pool of free coenzyme A (CoA) and NAD. In terms of biological role, expression of the eut operon allows this bacteria to use ethanolamine (EA) as a carbon, nitrogen and energy source. It relies on cobalamin (vitamin B12) both as a cofactor for the ethanolamine ammonia-lyase (EAL) activity and to induce the operon. EA enhances bacterial survival in macrophages in a concentration-dependent manner, suggesting it is an important nutrient during infection. The polypeptide is Bacterial microcompartment shell vertex protein EutN (Salmonella typhimurium (strain LT2 / SGSC1412 / ATCC 700720)).